The chain runs to 127 residues: Holo-[acyl-carrier-protein] synthase (127 aa).

Residues Asp-9 and Glu-58 each contribute to the Mg(2+) site.

This sequence belongs to the P-Pant transferase superfamily. AcpS family. It depends on Mg(2+) as a cofactor.

The protein resides in the cytoplasm. It catalyses the reaction apo-[ACP] + CoA = holo-[ACP] + adenosine 3',5'-bisphosphate + H(+). In terms of biological role, transfers the 4'-phosphopantetheine moiety from coenzyme A to a Ser of acyl-carrier-protein. The protein is Holo-[acyl-carrier-protein] synthase of Shewanella oneidensis (strain ATCC 700550 / JCM 31522 / CIP 106686 / LMG 19005 / NCIMB 14063 / MR-1).